Consider the following 487-residue polypeptide: b(0,+)-type amino acid transporter 1 (487 aa).

Residues methionine 1–glutamate 20 are disordered. Residues methionine 1–glycine 31 lie on the Cytoplasmic side of the membrane. Position 18 is a phosphoserine (serine 18). The helical transmembrane segment at leucine 32–valine 55 threads the bilayer. Position 43-47 (isoleucine 43–glycine 47) interacts with L-arginine. At leucine 56–valine 62 the chain is on the extracellular side. Residues glycine 63–alanine 84 form a helical membrane-spanning segment. The Cytoplasmic segment spans residues glutamate 85 to tyrosine 110. A helical transmembrane segment spans residues leucine 111 to cysteine 137. At alanine 138–proline 147 the chain is on the extracellular side. A run of 2 helical transmembrane segments spans residues alanine 148 to serine 169 and valine 170 to isoleucine 193. Over serine 194 to serine 217 the chain is Extracellular. Residues valine 218–leucine 238 traverse the membrane as a helical segment. An L-arginine-binding site is contributed by aspartate 233. Residues asparagine 239 to asparagine 251 are Cytoplasmic-facing. A helical transmembrane segment spans residues leucine 252–tyrosine 274. At phenylalanine 275 to serine 302 the chain is on the extracellular side. A helical membrane pass occupies residues tryptophan 303 to glycine 325. Topologically, residues arginine 326–proline 351 are cytoplasmic. 2 helical membrane-spanning segments follow: residues alanine 352–aspartate 370 and isoleucine 371–leucine 391. Topologically, residues glycine 392 to proline 410 are cytoplasmic. A helical membrane pass occupies residues leucine 411–serine 431. The Extracellular portion of the chain corresponds to glutamate 432–alanine 434. Residues tryptophan 435–phenylalanine 450 traverse the membrane as a helical segment. The Cytoplasmic segment spans residues tyrosine 451–glutamate 487.

This sequence belongs to the amino acid-polyamine-organocation (APC) superfamily. As to quaternary structure, disulfide-linked heterodimer composed of the catalytic light chain subunit SLC7A9 and the heavy chain subunit SLC3A1. The heterodimer is the minimal functional unit. Assembles in heterotetramers (dimers of heterodimers) and higher order oligomers; the oligomerization is mediated by SLC3A1 likely to prevent degradation and facilitate heteromer trafficking to the plasma membrane. Interacts with CAV1. Expressed in the brush border membrane in the kidney (at protein level).

Its subcellular location is the apical cell membrane. The catalysed reaction is L-leucine(out) + L-arginine(in) = L-leucine(in) + L-arginine(out). It carries out the reaction L-histidine(out) + L-arginine(in) = L-histidine(in) + L-arginine(out). The enzyme catalyses L-arginine(in) + L-phenylalanine(out) = L-arginine(out) + L-phenylalanine(in). It catalyses the reaction L-cysteine(out) + L-arginine(in) = L-cysteine(in) + L-arginine(out). The catalysed reaction is L-cystine(out) + L-arginine(in) = L-cystine(in) + L-arginine(out). It carries out the reaction L-lysine(out) + L-arginine(in) = L-lysine(in) + L-arginine(out). Its function is as follows. Associates with SLC3A1 to form a functional transporter complex that mediates the electrogenic exchange between cationic amino acids and neutral amino acids, with a stoichiometry of 1:1. Has system b(0,+)-like activity with high affinity for extracellular cationic amino acids and L-cystine and lower affinity for intracellular neutral amino acids. Substrate exchange is driven by high concentration of intracellular neutral amino acids and the intracellular reduction of L-cystine to L-cysteine. Required for reabsorption of L-cystine and dibasic amino acids across the brush border membrane in renal proximal tubules. The chain is b(0,+)-type amino acid transporter 1 (Slc7a9) from Mus musculus (Mouse).